The following is a 1171-amino-acid chain: Phytochrome B (1171 aa).

A compositionally biased stretch (low complexity) spans 1–19; the sequence is MASGSRATPTRSPSSARPA. A disordered region spans residues 1 to 53; it reads MASGSRATPTRSPSSARPAAPRHQHHHSQSSGGSTSRAGGGGGGGGGGGGGAA. Over residues 38–52 the composition is skewed to gly residues; sequence AGGGGGGGGGGGGGA. Residues 259 to 442 form the GAF domain; the sequence is DVKLLCDTVV…AFGLQLNMEL (184 aa). Position 364 (Cys364) interacts with phytochromobilin. PAS domains are found at residues 661–732 and 795–866; these read VARE…LRGD and DYKA…MIVL. The Histidine kinase domain maps to 943-1161; that stretch reads YIYQEIKNPL…FFHIVLELPQ (219 aa).

The protein belongs to the phytochrome family. Homodimer. Post-translationally, contains one covalently linked phytochromobilin chromophore.

Functionally, regulatory photoreceptor which exists in two forms that are reversibly interconvertible by light: the Pr form that absorbs maximally in the red region of the spectrum and the Pfr form that absorbs maximally in the far-red region. Photoconversion of Pr to Pfr induces an array of morphogenic responses, whereas reconversion of Pfr to Pr cancels the induction of those responses. Pfr controls the expression of a number of nuclear genes including those encoding the small subunit of ribulose-bisphosphate carboxylase, chlorophyll A/B binding protein, protochlorophyllide reductase, rRNA, etc. It also controls the expression of its own gene(s) in a negative feedback fashion. In Oryza sativa subsp. indica (Rice), this protein is Phytochrome B (PHYB).